A 56-amino-acid chain; its full sequence is Protein YqiD (56 aa).

A helical transmembrane segment spans residues 2–22 (FIAWYWIVLIALVVVGYFLHL).

It localises to the cell inner membrane. The sequence is that of Protein YqiD from Escherichia coli (strain K12).